A 589-amino-acid chain; its full sequence is Probable translation initiation factor IF-2 (589 aa).

One can recognise a tr-type G domain in the interval 5 to 219; the sequence is IRTPIVCVLG…IMIGLAQRYL (215 aa). The segment at 14-21 is G1; that stretch reads GHVDHGKT. 14-21 serves as a coordination point for GTP; the sequence is GHVDHGKT. Positions 39-43 are G2; it reads AITQH. The tract at residues 75–78 is G3; the sequence is DTPG. GTP-binding positions include 75-79 and 129-132; these read DTPGH and TKLD. The segment at 129 to 132 is G4; it reads TKLD. The segment at 197–199 is G5; it reads SSM.

The protein belongs to the TRAFAC class translation factor GTPase superfamily. Classic translation factor GTPase family. IF-2 subfamily.

Functionally, function in general translation initiation by promoting the binding of the formylmethionine-tRNA to ribosomes. Seems to function along with eIF-2. The sequence is that of Probable translation initiation factor IF-2 from Methanocorpusculum labreanum (strain ATCC 43576 / DSM 4855 / Z).